The following is a 359-amino-acid chain: CDP-glucose 4,6-dehydratase (359 aa).

This sequence belongs to the NAD(P)-dependent epimerase/dehydratase family. The cofactor is NAD(+).

It carries out the reaction CDP-D-glucose = CDP-4-dehydro-6-deoxy-D-glucose + H2O. It functions in the pathway nucleotide-sugar biosynthesis; CDP-3,6-dideoxy-D-mannose biosynthesis; CDP-3,6-dideoxy-D-mannose from CTP and alpha-D-glucose 1-phosphate: step 2/5. Its pathway is bacterial outer membrane biogenesis; LPS O-antigen biosynthesis. This chain is CDP-glucose 4,6-dehydratase (rfbG), found in Salmonella typhimurium (strain LT2 / SGSC1412 / ATCC 700720).